Reading from the N-terminus, the 153-residue chain is Endoribonuclease YbeY (153 aa).

His114, His118, and His124 together coordinate Zn(2+).

This sequence belongs to the endoribonuclease YbeY family. Requires Zn(2+) as cofactor.

It is found in the cytoplasm. Functionally, single strand-specific metallo-endoribonuclease involved in late-stage 70S ribosome quality control and in maturation of the 3' terminus of the 16S rRNA. The protein is Endoribonuclease YbeY of Shewanella sp. (strain MR-4).